Consider the following 278-residue polypeptide: Digeranylgeranylglyceryl phosphate synthase (278 aa).

8 consecutive transmembrane segments (helical) span residues 17-37, 40-60, 91-111, 129-149, 153-173, 204-224, 226-246, and 257-277; these read MASF…LEMV, LIFA…LNDI, LLVF…LMAV, IIGN…GGIA, IDVT…REII, LLLV…FFGI, YLIS…PLLI, and SRNI…GSFF.

The protein belongs to the UbiA prenyltransferase family. DGGGP synthase subfamily. Mg(2+) is required as a cofactor.

It is found in the cell membrane. The catalysed reaction is sn-3-O-(geranylgeranyl)glycerol 1-phosphate + (2E,6E,10E)-geranylgeranyl diphosphate = 2,3-bis-O-(geranylgeranyl)-sn-glycerol 1-phosphate + diphosphate. It participates in membrane lipid metabolism; glycerophospholipid metabolism. In terms of biological role, prenyltransferase that catalyzes the transfer of the geranylgeranyl moiety of geranylgeranyl diphosphate (GGPP) to the C2 hydroxyl of (S)-3-O-geranylgeranylglyceryl phosphate (GGGP). This reaction is the second ether-bond-formation step in the biosynthesis of archaeal membrane lipids. This Methanococcus maripaludis (strain C5 / ATCC BAA-1333) protein is Digeranylgeranylglyceryl phosphate synthase.